The sequence spans 132 residues: Phosphoribosyl-AMP cyclohydrolase (132 aa).

Aspartate 89 lines the Mg(2+) pocket. Cysteine 90 is a binding site for Zn(2+). Residues aspartate 91 and aspartate 93 each contribute to the Mg(2+) site. Cysteine 106 and cysteine 113 together coordinate Zn(2+).

It belongs to the PRA-CH family. Homodimer. It depends on Mg(2+) as a cofactor. Zn(2+) is required as a cofactor.

Its subcellular location is the cytoplasm. The catalysed reaction is 1-(5-phospho-beta-D-ribosyl)-5'-AMP + H2O = 1-(5-phospho-beta-D-ribosyl)-5-[(5-phospho-beta-D-ribosylamino)methylideneamino]imidazole-4-carboxamide. The protein operates within amino-acid biosynthesis; L-histidine biosynthesis; L-histidine from 5-phospho-alpha-D-ribose 1-diphosphate: step 3/9. Functionally, catalyzes the hydrolysis of the adenine ring of phosphoribosyl-AMP. The sequence is that of Phosphoribosyl-AMP cyclohydrolase from Renibacterium salmoninarum (strain ATCC 33209 / DSM 20767 / JCM 11484 / NBRC 15589 / NCIMB 2235).